A 571-amino-acid polypeptide reads, in one-letter code: Proline--tRNA ligase (571 aa).

The protein belongs to the class-II aminoacyl-tRNA synthetase family. ProS type 1 subfamily. As to quaternary structure, homodimer.

The protein resides in the cytoplasm. It catalyses the reaction tRNA(Pro) + L-proline + ATP = L-prolyl-tRNA(Pro) + AMP + diphosphate. Catalyzes the attachment of proline to tRNA(Pro) in a two-step reaction: proline is first activated by ATP to form Pro-AMP and then transferred to the acceptor end of tRNA(Pro). As ProRS can inadvertently accommodate and process non-cognate amino acids such as alanine and cysteine, to avoid such errors it has two additional distinct editing activities against alanine. One activity is designated as 'pretransfer' editing and involves the tRNA(Pro)-independent hydrolysis of activated Ala-AMP. The other activity is designated 'posttransfer' editing and involves deacylation of mischarged Ala-tRNA(Pro). The misacylated Cys-tRNA(Pro) is not edited by ProRS. The chain is Proline--tRNA ligase from Vibrio campbellii (strain ATCC BAA-1116).